A 249-amino-acid chain; its full sequence is Large ribosomal subunit protein uL1 (249 aa).

It belongs to the universal ribosomal protein uL1 family. As to quaternary structure, part of the 50S ribosomal subunit.

Its function is as follows. Binds directly to 23S rRNA. The L1 stalk is quite mobile in the ribosome, and is involved in E site tRNA release. In terms of biological role, protein L1 is also a translational repressor protein, it controls the translation of the L11 operon by binding to its mRNA. The protein is Large ribosomal subunit protein uL1 of Orientia tsutsugamushi (strain Ikeda) (Rickettsia tsutsugamushi).